Here is a 304-residue protein sequence, read N- to C-terminus: N-acetylmuramic acid 6-phosphate etherase (304 aa).

The 164-residue stretch at 62–225 (IVQAFQNGGR…TTASMVMIGK (164 aa)) folds into the SIS domain. The active-site Proton donor is the Glu90. The active site involves Glu121.

The protein belongs to the GCKR-like family. MurNAc-6-P etherase subfamily. Homodimer.

The enzyme catalyses N-acetyl-D-muramate 6-phosphate + H2O = N-acetyl-D-glucosamine 6-phosphate + (R)-lactate. The protein operates within amino-sugar metabolism; 1,6-anhydro-N-acetylmuramate degradation. Its pathway is amino-sugar metabolism; N-acetylmuramate degradation. It participates in cell wall biogenesis; peptidoglycan recycling. In terms of biological role, specifically catalyzes the cleavage of the D-lactyl ether substituent of MurNAc 6-phosphate, producing GlcNAc 6-phosphate and D-lactate. Together with AnmK, is also required for the utilization of anhydro-N-acetylmuramic acid (anhMurNAc) either imported from the medium or derived from its own cell wall murein, and thus plays a role in cell wall recycling. The polypeptide is N-acetylmuramic acid 6-phosphate etherase (Actinobacillus pleuropneumoniae serotype 7 (strain AP76)).